The chain runs to 146 residues: MVGSNFGIIYHNSAGGASSHGQSSGGGGGGDRDRTTPSSHLSDFMSQLEDYTPLIPDAVTSHYLNMGGFQSDDKRIVRLISLAAQKYMSDIIDDALQHSKARTHMQTTNTPGGSKAKDRKFTLTMEDLQPALADYGINVRKVDYSQ.

The segment at 16 to 43 (GASSHGQSSGGGGGGDRDRTTPSSHLSD) is disordered.

This sequence belongs to the TAF10 family. Belongs to the TFIID complex which is composed of TATA binding protein (Tbp) and a number of TBP-associated factors (TAFs). The N-terminus interacts with the histone fold of Taf8. At embryonic stage 9, expression is seen in the mesodermal layer and midgut primordia. The mesoderm-specific expression persists in later stages of development and at its highest level is detected in midgut, hindgut, and differentiating somatic muscle fibers. Coexpressed with Taf10 in the lateral epidermis and anal plate.

It is found in the cytoplasm. The protein localises to the nucleus. In terms of biological role, TFIID is a multimeric protein complex that plays a central role in mediating promoter responses to various activators and repressors. The protein is Transcription initiation factor TFIID subunit 10b of Drosophila melanogaster (Fruit fly).